The chain runs to 2075 residues: Autophagy-related protein 2 homolog B (2075 aa).

The region spanning 13 to 107 (ACRYLLQRYL…LEMVFRPRPR (95 aa)) is the Chorein N-terminal domain. Phosphoserine occurs at positions 255, 379, 496, 839, 885, 898, and 1007. Position 1011 is a phosphotyrosine (tyrosine 1011). 2 positions are modified to phosphoserine: serine 1015 and serine 1017. At threonine 1021 the chain carries Phosphothreonine. The disordered stretch occupies residues 1373 to 1403 (KAEMKPGVPQRKPKVDSSARSSSHGPVLPEA). Serine 1525 bears the Phosphoserine mark. Disordered stretches follow at residues 1570 to 1593 (TSPA…GRHT), 1759 to 1792 (EPNL…EDVS), and 2055 to 2075 (RNQI…HGED). The span at 1578-1587 (PHSSPSQTPT) shows a compositional bias: polar residues. Residues 2058–2075 (IRPDVRQDESQKWRHGED) are compositionally biased toward basic and acidic residues.

Belongs to the ATG2 family. Interacts with WDR45/WIPI4.

It is found in the preautophagosomal structure membrane. The protein localises to the lipid droplet. It localises to the endoplasmic reticulum membrane. It carries out the reaction a 1,2-diacyl-sn-glycero-3-phospho-L-serine(in) = a 1,2-diacyl-sn-glycero-3-phospho-L-serine(out). The catalysed reaction is a 1,2-diacyl-sn-glycero-3-phosphoethanolamine(in) = a 1,2-diacyl-sn-glycero-3-phosphoethanolamine(out). Lipid transfer protein required for both autophagosome formation and regulation of lipid droplet morphology and dispersion. Tethers the edge of the isolation membrane (IM) to the endoplasmic reticulum (ER) and mediates direct lipid transfer from ER to IM for IM expansion. Binds to the ER exit site (ERES), which is the membrane source for autophagosome formation, and extracts phospholipids from the membrane source and transfers them to ATG9 (ATG9A or ATG9B) to the IM for membrane expansion. Lipid transfer activity is enhanced by WDR45/WIPI4, which promotes ATG2B-association with phosphatidylinositol 3-monophosphate (PI3P)-containing membranes. The protein is Autophagy-related protein 2 homolog B of Mus musculus (Mouse).